The following is a 165-amino-acid chain: Phosphopantetheine adenylyltransferase (165 aa).

A substrate-binding site is contributed by serine 11. Residues 11–12 (SF) and histidine 19 contribute to the ATP site. Substrate contacts are provided by lysine 43, threonine 76, and arginine 90. ATP is bound by residues 91–93 (GIR), glutamate 101, and 126–132 (FSFISSS).

This sequence belongs to the bacterial CoaD family. As to quaternary structure, homohexamer. Mg(2+) is required as a cofactor.

It is found in the cytoplasm. The catalysed reaction is (R)-4'-phosphopantetheine + ATP + H(+) = 3'-dephospho-CoA + diphosphate. The protein operates within cofactor biosynthesis; coenzyme A biosynthesis; CoA from (R)-pantothenate: step 4/5. Reversibly transfers an adenylyl group from ATP to 4'-phosphopantetheine, yielding dephospho-CoA (dPCoA) and pyrophosphate. In Latilactobacillus sakei subsp. sakei (strain 23K) (Lactobacillus sakei subsp. sakei), this protein is Phosphopantetheine adenylyltransferase.